The chain runs to 463 residues: Gamma-aminobutyric acid receptor subunit alpha-5 (463 aa).

The N-terminal stretch at 1–25 (MDNGMLSRFIMTQTLLVFCISMTLS) is a signal peptide. The Extracellular segment spans residues 26-260 (SHFGFSQMPT…FHLKRKIGYF (235 aa)). Residue asparagine 45 is glycosylated (N-linked (GlcNAc...) asparagine). Arginine 101 is a 4-aminobutanoate binding site. Residue asparagine 145 is glycosylated (N-linked (GlcNAc...) asparagine). Residue threonine 164 participates in 4-aminobutanoate binding. Cysteine 173 and cysteine 187 are disulfide-bonded. Residues asparagine 207 and asparagine 236 are each glycosylated (N-linked (GlcNAc...) asparagine). 3 consecutive transmembrane segments (helical) span residues 261-281 (VIQT…SFWL), 287-308 (PART…ISAR), and 319-340 (AMDW…EFAT). Residues 341–428 (VNYFTKRGWA…TYNSISKIDK (88 aa)) are Cytoplasmic-facing. Lysine 355 participates in a covalent cross-link: Glycyl lysine isopeptide (Lys-Gly) (interchain with G-Cter in ubiquitin). The interval 387–408 (PNIPKEQPPAGTANAPTVSIKA) is disordered. A helical transmembrane segment spans residues 429-449 (MSRIVFPILFGTFNLVYWATY).

The protein belongs to the ligand-gated ion channel (TC 1.A.9) family. Gamma-aminobutyric acid receptor (TC 1.A.9.5) subfamily. GABRA5 sub-subfamily. Heteropentamer, formed by a combination of alpha (GABRA1-6), beta (GABRB1-3), gamma (GABRG1-3), delta (GABRD), epsilon (GABRE), rho (GABRR1-3), pi (GABRP) and theta (GABRQ) chains, each subunit exhibiting distinct physiological and pharmacological properties. In terms of tissue distribution, expressed in brain, in hippocampal pyramidal neurons.

It is found in the postsynaptic cell membrane. The protein resides in the cell membrane. It catalyses the reaction chloride(in) = chloride(out). In terms of biological role, alpha subunit of the heteropentameric ligand-gated chloride channel gated by gamma-aminobutyric acid (GABA), a major inhibitory neurotransmitter in the brain. GABA-gated chloride channels, also named GABA(A) receptors (GABAAR), consist of five subunits arranged around a central pore and contain GABA active binding site(s) located at the alpha and beta subunit interface(s). When activated by GABA, GABAARs selectively allow the flow of chloride anions across the cell membrane down their electrochemical gradient. GABAARs containing alpha-5/GABRA5 are mainly extrasynaptic and contribute to the tonic GABAergic inhibition of the hippocampus. Extrasynaptic alpha-5-containing GABAARs in CA1 pyramidal neurons play a role in learning and memory processes. In Mus musculus (Mouse), this protein is Gamma-aminobutyric acid receptor subunit alpha-5.